We begin with the raw amino-acid sequence, 132 residues long: Fatty acid-binding protein, intestinal (132 aa).

Ala2 carries the post-translational modification N-acetylalanine. Residues Trp83 and Arg107 each contribute to the hexadecanoate site. Trp83 and Arg107 together coordinate tetradecanoate.

Belongs to the calycin superfamily. Fatty-acid binding protein (FABP) family. Expressed in the small intestine. Expression in the mucosal cells of the ileum extends from the midvillar region to the villus tips.

Its subcellular location is the cytoplasm. In terms of biological role, FABPs are thought to play a role in the intracellular transport of long-chain fatty acids and their acyl-CoA esters. FABP2 is probably involved in triglyceride-rich lipoprotein synthesis. Binds saturated long-chain fatty acids with a high affinity, but binds with a lower affinity to unsaturated long-chain fatty acids. FABP2 may also help maintain energy homeostasis by functioning as a lipid sensor. In Rattus norvegicus (Rat), this protein is Fatty acid-binding protein, intestinal (Fabp2).